The primary structure comprises 579 residues: Isocitrate dehydrogenase kinase/phosphatase (579 aa).

ATP is bound by residues 324–330 (ADGTPGM) and lysine 345. Residue aspartate 380 is part of the active site.

The protein belongs to the AceK family.

It localises to the cytoplasm. The catalysed reaction is L-seryl-[isocitrate dehydrogenase] + ATP = O-phospho-L-seryl-[isocitrate dehydrogenase] + ADP + H(+). In terms of biological role, bifunctional enzyme which can phosphorylate or dephosphorylate isocitrate dehydrogenase (IDH) on a specific serine residue. This is a regulatory mechanism which enables bacteria to bypass the Krebs cycle via the glyoxylate shunt in response to the source of carbon. When bacteria are grown on glucose, IDH is fully active and unphosphorylated, but when grown on acetate or ethanol, the activity of IDH declines drastically concomitant with its phosphorylation. The protein is Isocitrate dehydrogenase kinase/phosphatase of Xanthomonas axonopodis pv. citri (strain 306).